The chain runs to 545 residues: CWF19-like protein 1 homolog (545 aa).

Positions 306–329 (YFYDMDGGRRKRQGGDNNKRDKRP) are disordered.

Belongs to the CWF19 family.

This is CWF19-like protein 1 homolog from Drosophila melanogaster (Fruit fly).